The primary structure comprises 165 residues: 3-isopropylmalate dehydratase small subunit (165 aa).

Belongs to the LeuD family. LeuD type 2 subfamily. As to quaternary structure, heterodimer of LeuC and LeuD.

The catalysed reaction is (2R,3S)-3-isopropylmalate = (2S)-2-isopropylmalate. The protein operates within amino-acid biosynthesis; L-leucine biosynthesis; L-leucine from 3-methyl-2-oxobutanoate: step 2/4. Functionally, catalyzes the isomerization between 2-isopropylmalate and 3-isopropylmalate, via the formation of 2-isopropylmaleate. The protein is 3-isopropylmalate dehydratase small subunit of Saccharolobus islandicus (strain M.16.27) (Sulfolobus islandicus).